Consider the following 635-residue polypeptide: tRNA 5-methylaminomethyl-2-thiouridine biosynthesis bifunctional protein MnmC (635 aa).

Residues 1–227 (MSEPIDWLPD…KRSNLQAEFD (227 aa)) are tRNA (mnm(5)s(2)U34)-methyltransferase. Residues 254–635 (IGGGLSGAAV…ALSTERLPAD (382 aa)) form an FAD-dependent cmnm(5)s(2)U34 oxidoreductase region.

It in the N-terminal section; belongs to the methyltransferase superfamily. tRNA (mnm(5)s(2)U34)-methyltransferase family. In the C-terminal section; belongs to the DAO family. FAD is required as a cofactor.

It localises to the cytoplasm. It catalyses the reaction 5-aminomethyl-2-thiouridine(34) in tRNA + S-adenosyl-L-methionine = 5-methylaminomethyl-2-thiouridine(34) in tRNA + S-adenosyl-L-homocysteine + H(+). Functionally, catalyzes the last two steps in the biosynthesis of 5-methylaminomethyl-2-thiouridine (mnm(5)s(2)U) at the wobble position (U34) in tRNA. Catalyzes the FAD-dependent demodification of cmnm(5)s(2)U34 to nm(5)s(2)U34, followed by the transfer of a methyl group from S-adenosyl-L-methionine to nm(5)s(2)U34, to form mnm(5)s(2)U34. In Paracidovorax citrulli (strain AAC00-1) (Acidovorax citrulli), this protein is tRNA 5-methylaminomethyl-2-thiouridine biosynthesis bifunctional protein MnmC.